We begin with the raw amino-acid sequence, 179 residues long: MAKLHDYYKDEVVKQLMSQFGYDSVMQVPRVEKITLNMGVGEAIADKKLLDNAAADLAAISGQKPFITKARKSVAGFKIRQGYPIGCKVTLRGERMWEFFERLITIAVPRIRDFRGLSAKSFDGRGNYSMGVREQIIFPEIDYDKVDRVRGLDITITTTAKSDDEGRALLAAFKFPFRK.

This sequence belongs to the universal ribosomal protein uL5 family. Part of the 50S ribosomal subunit; part of the 5S rRNA/L5/L18/L25 subcomplex. Contacts the 5S rRNA and the P site tRNA. Forms a bridge to the 30S subunit in the 70S ribosome.

Its function is as follows. This is one of the proteins that bind and probably mediate the attachment of the 5S RNA into the large ribosomal subunit, where it forms part of the central protuberance. In the 70S ribosome it contacts protein S13 of the 30S subunit (bridge B1b), connecting the 2 subunits; this bridge is implicated in subunit movement. Contacts the P site tRNA; the 5S rRNA and some of its associated proteins might help stabilize positioning of ribosome-bound tRNAs. The polypeptide is Large ribosomal subunit protein uL5 (Yersinia pestis).